The following is a 64-amino-acid chain: Large ribosomal subunit protein bL28 (64 aa).

It belongs to the bacterial ribosomal protein bL28 family.

The chain is Large ribosomal subunit protein bL28 from Campylobacter lari (strain RM2100 / D67 / ATCC BAA-1060).